Reading from the N-terminus, the 43-residue chain is Protein PsbN (43 aa).

The helical transmembrane segment at T5–F27 threads the bilayer.

The protein belongs to the PsbN family.

It localises to the plastid. It is found in the chloroplast thylakoid membrane. Functionally, may play a role in photosystem I and II biogenesis. The chain is Protein PsbN from Exsertotheca crispa (Moss).